A 575-amino-acid chain; its full sequence is Malto-oligosyltrehalose trehalohydrolase (575 aa).

248–253 contacts substrate; sequence RLDAVH. Residue Asp-250 is the Nucleophile of the active site. Glu-287 serves as the catalytic Proton donor. Substrate contacts are provided by residues 312 to 316 and 381 to 386; these read DDVHH and HDQVGN.

This sequence belongs to the glycosyl hydrolase 13 family.

The protein localises to the cytoplasm. It catalyses the reaction hydrolysis of (1-&gt;4)-alpha-D-glucosidic linkage in 4-alpha-D-[(1-&gt;4)-alpha-D-glucanosyl]n trehalose to yield trehalose and (1-&gt;4)-alpha-D-glucan.. Its pathway is glycan biosynthesis; trehalose biosynthesis. The sequence is that of Malto-oligosyltrehalose trehalohydrolase (treZ) from Arthrobacter ramosus.